The chain runs to 136 residues: Globin CTP-III (136 aa).

Residues 1-136 (LSADQISTVQ…TFFGMIFSKM (136 aa)) form the Globin domain. Residue His87 coordinates heme b.

The protein belongs to the globin family. Monomer.

This chain is Globin CTP-III, found in Chironomus thummi piger (Midge).